The following is a 185-amino-acid chain: ATP-dependent protease subunit HslV (185 aa).

Threonine 13 is a catalytic residue. Glycine 167, cysteine 170, and threonine 173 together coordinate Na(+).

The protein belongs to the peptidase T1B family. HslV subfamily. In terms of assembly, a double ring-shaped homohexamer of HslV is capped on each side by a ring-shaped HslU homohexamer. The assembly of the HslU/HslV complex is dependent on binding of ATP.

It localises to the cytoplasm. It catalyses the reaction ATP-dependent cleavage of peptide bonds with broad specificity.. With respect to regulation, allosterically activated by HslU binding. Protease subunit of a proteasome-like degradation complex believed to be a general protein degrading machinery. This chain is ATP-dependent protease subunit HslV, found in Sinorhizobium medicae (strain WSM419) (Ensifer medicae).